Here is a 213-residue protein sequence, read N- to C-terminus: Probable inactive serine/threonine-protein kinase DDB_G0280559 (213 aa).

The Protein kinase domain occupies 1–211 (MVLRYSYVFK…WNEIVNHSFF (211 aa)).

It belongs to the protein kinase superfamily. Ser/Thr protein kinase family.

The protein is Probable inactive serine/threonine-protein kinase DDB_G0280559 of Dictyostelium discoideum (Social amoeba).